A 284-amino-acid polypeptide reads, in one-letter code: Tetraspanin-10 (284 aa).

The Cytoplasmic segment spans residues Met-1 to Arg-11. A helical transmembrane segment spans residues Trp-12 to Ser-32. Residues Thr-33–Thr-43 lie on the Extracellular side of the membrane. The helical transmembrane segment at Phe-44 to Ala-64 threads the bilayer. Residues Cys-65–Tyr-75 lie on the Cytoplasmic side of the membrane. A helical transmembrane segment spans residues Leu-76–Val-96. At Thr-97 to Glu-228 the chain is on the extracellular side. N-linked (GlcNAc...) asparagine glycans are attached at residues Asn-99, Asn-128, and Asn-183. Residues Trp-229–Ser-249 form a helical membrane-spanning segment. At Thr-250–Phe-284 the chain is on the cytoplasmic side.

This sequence belongs to the tetraspanin (TM4SF) family.

It is found in the membrane. In terms of biological role, may be involved in the regulation of cell differentiation. In Arabidopsis thaliana (Mouse-ear cress), this protein is Tetraspanin-10 (TET10).